Reading from the N-terminus, the 460-residue chain is Argininosuccinate lyase (460 aa).

Belongs to the lyase 1 family. Argininosuccinate lyase subfamily.

Its subcellular location is the cytoplasm. It catalyses the reaction 2-(N(omega)-L-arginino)succinate = fumarate + L-arginine. The protein operates within amino-acid biosynthesis; L-arginine biosynthesis; L-arginine from L-ornithine and carbamoyl phosphate: step 3/3. This chain is Argininosuccinate lyase, found in Pelotomaculum thermopropionicum (strain DSM 13744 / JCM 10971 / SI).